The following is a 331-amino-acid chain: Adenosine deaminase (331 aa).

Residues H12 and H14 each coordinate Zn(2+). Residues H14 and D16 each coordinate substrate. H197 contacts Zn(2+). The active-site Proton donor is E200. D278 is a binding site for Zn(2+).

It belongs to the metallo-dependent hydrolases superfamily. Adenosine and AMP deaminases family. Adenosine deaminase subfamily. The cofactor is Zn(2+).

It carries out the reaction adenosine + H2O + H(+) = inosine + NH4(+). The enzyme catalyses 2'-deoxyadenosine + H2O + H(+) = 2'-deoxyinosine + NH4(+). Functionally, catalyzes the hydrolytic deamination of adenosine and 2-deoxyadenosine. The polypeptide is Adenosine deaminase (Shewanella halifaxensis (strain HAW-EB4)).